We begin with the raw amino-acid sequence, 406 residues long: Cysteine desulfurase (406 aa).

At lysine 226 the chain carries N6-(pyridoxal phosphate)lysine. The Cysteine persulfide intermediate role is filled by cysteine 364.

Belongs to the class-V pyridoxal-phosphate-dependent aminotransferase family. Csd subfamily. As to quaternary structure, homodimer. Interacts with SufE and the SufBCD complex composed of SufB, SufC and SufD. The interaction with SufE is required to mediate the direct transfer of the sulfur atom from the S-sulfanylcysteine. The cofactor is pyridoxal 5'-phosphate.

It localises to the cytoplasm. The enzyme catalyses (sulfur carrier)-H + L-cysteine = (sulfur carrier)-SH + L-alanine. It carries out the reaction L-selenocysteine + AH2 = hydrogenselenide + L-alanine + A + H(+). Its pathway is cofactor biosynthesis; iron-sulfur cluster biosynthesis. Its function is as follows. Cysteine desulfurases mobilize the sulfur from L-cysteine to yield L-alanine, an essential step in sulfur metabolism for biosynthesis of a variety of sulfur-containing biomolecules. Component of the suf operon, which is activated and required under specific conditions such as oxidative stress and iron limitation. Acts as a potent selenocysteine lyase in vitro, that mobilizes selenium from L-selenocysteine. Selenocysteine lyase activity is however unsure in vivo. This Klebsiella pneumoniae subsp. pneumoniae (strain ATCC 700721 / MGH 78578) protein is Cysteine desulfurase.